Consider the following 435-residue polypeptide: MPLPIVAIVGQPNVGKSTLFNRIINERVAIVEDRPGVTRDRNYARASWMGHQFSIIDTGGITWEDSTIDEEIRAQAEIAIEEADVIVMLADASQGVTSLDERIAHLLYRADKPVLLAVNKADNPEQRTDIYDFYSLGLGDPIPVSGSHGTGIGDLLDEVVKNFSPDAEKTEEGVISFSVIGRPNVGKSSIVNRLLGEERVIVANEEGTTRDAIDTPFVKDGTKFRVVDTAGIRRRGKVYEKTEKYSVMRAMSAMERSDVAILVLDASTGIREQDKHVAGYAHEAGLGMIIAVNKWDLPKKDSSSGKDFEAVIREEFSYLDYAPIVFVSAKTGKNIDQLPKMVKEVYENKNQRIQSSVLNDLLLEASRLVPAPMVKGKRLRVYYMTQVKTNPPTFVVFCNDPELMHFSYQRFLINQLRENFDFTGTPIKILPRKRK.

2 EngA-type G domains span residues 4-167 (PIVA…SPDA) and 175-350 (ISFS…ENKN). GTP contacts are provided by residues 10–17 (GQPNVGKS), 57–61 (DTGGI), 119–122 (NKAD), 181–188 (GRPNVGKS), 228–232 (DTAGI), and 293–296 (NKWD). Residues 351–435 (QRIQSSVLND…PIKILPRKRK (85 aa)) enclose the KH-like domain.

This sequence belongs to the TRAFAC class TrmE-Era-EngA-EngB-Septin-like GTPase superfamily. EngA (Der) GTPase family. In terms of assembly, associates with the 50S ribosomal subunit.

Its function is as follows. GTPase that plays an essential role in the late steps of ribosome biogenesis. The protein is GTPase Der of Lactobacillus delbrueckii subsp. bulgaricus (strain ATCC 11842 / DSM 20081 / BCRC 10696 / JCM 1002 / NBRC 13953 / NCIMB 11778 / NCTC 12712 / WDCM 00102 / Lb 14).